Reading from the N-terminus, the 198-residue chain is FMN-dependent NADH:quinone oxidoreductase (198 aa).

Residues 92 to 95 (MWNL) and 136 to 139 (SRGG) each bind FMN.

It belongs to the azoreductase type 1 family. As to quaternary structure, homodimer. FMN serves as cofactor.

The enzyme catalyses 2 a quinone + NADH + H(+) = 2 a 1,4-benzosemiquinone + NAD(+). It catalyses the reaction N,N-dimethyl-1,4-phenylenediamine + anthranilate + 2 NAD(+) = 2-(4-dimethylaminophenyl)diazenylbenzoate + 2 NADH + 2 H(+). In terms of biological role, quinone reductase that provides resistance to thiol-specific stress caused by electrophilic quinones. Functionally, also exhibits azoreductase activity. Catalyzes the reductive cleavage of the azo bond in aromatic azo compounds to the corresponding amines. The polypeptide is FMN-dependent NADH:quinone oxidoreductase (Clostridium perfringens (strain ATCC 13124 / DSM 756 / JCM 1290 / NCIMB 6125 / NCTC 8237 / Type A)).